The following is a 452-amino-acid chain: Pup--protein ligase (452 aa).

Glu-9 contacts Mg(2+). ATP is bound at residue Arg-53. A Mg(2+)-binding site is contributed by Tyr-55. Catalysis depends on Asp-57, which acts as the Proton acceptor. A Mg(2+)-binding site is contributed by Glu-63. ATP is bound by residues Thr-66 and Trp-419.

The protein belongs to the Pup ligase/Pup deamidase family. Pup-conjugating enzyme subfamily.

The catalysed reaction is ATP + [prokaryotic ubiquitin-like protein]-L-glutamate + [protein]-L-lysine = ADP + phosphate + N(6)-([prokaryotic ubiquitin-like protein]-gamma-L-glutamyl)-[protein]-L-lysine.. It participates in protein degradation; proteasomal Pup-dependent pathway. It functions in the pathway protein modification; protein pupylation. Catalyzes the covalent attachment of the prokaryotic ubiquitin-like protein modifier Pup to the proteasomal substrate proteins, thereby targeting them for proteasomal degradation. This tagging system is termed pupylation. The ligation reaction involves the side-chain carboxylate of the C-terminal glutamate of Pup and the side-chain amino group of a substrate lysine. In Saccharomonospora viridis (strain ATCC 15386 / DSM 43017 / JCM 3036 / CCUG 5913 / NBRC 12207 / NCIMB 9602 / P101) (Thermoactinomyces viridis), this protein is Pup--protein ligase.